A 565-amino-acid polypeptide reads, in one-letter code: NAD-dependent malic enzyme (565 aa).

Catalysis depends on Tyr104, which acts as the Proton donor. NAD(+) is bound at residue Arg157. Catalysis depends on Lys175, which acts as the Proton acceptor. A divalent metal cation-binding residues include Glu246, Asp247, and Asp270. Residues Asp270 and Asn418 each contribute to the NAD(+) site.

Belongs to the malic enzymes family. Homotetramer. Mg(2+) serves as cofactor. It depends on Mn(2+) as a cofactor.

It carries out the reaction (S)-malate + NAD(+) = pyruvate + CO2 + NADH. It catalyses the reaction oxaloacetate + H(+) = pyruvate + CO2. This is NAD-dependent malic enzyme from Escherichia coli O127:H6 (strain E2348/69 / EPEC).